We begin with the raw amino-acid sequence, 174 residues long: Large ribosomal subunit protein uL10 (174 aa).

Belongs to the universal ribosomal protein uL10 family. As to quaternary structure, part of the ribosomal stalk of the 50S ribosomal subunit. The N-terminus interacts with L11 and the large rRNA to form the base of the stalk. The C-terminus forms an elongated spine to which L12 dimers bind in a sequential fashion forming a multimeric L10(L12)X complex.

Functionally, forms part of the ribosomal stalk, playing a central role in the interaction of the ribosome with GTP-bound translation factors. The sequence is that of Large ribosomal subunit protein uL10 from Vesicomyosocius okutanii subsp. Calyptogena okutanii (strain HA).